The sequence spans 385 residues: Probable threonine protease PRSS50 (385 aa).

The signal sequence occupies residues 1–39; that stretch reads MGRWCQTVARGQRPRTSAPSRAGALLLLLLLLRSAGCWG. The Peptidase S1 domain occupies 93-358; the sequence is VSEGKVDPYR…YQHWIWDCLN (266 aa). Asn133 carries N-linked (GlcNAc...) asparagine glycosylation. Cys138 and Cys154 are oxidised to a cystine. Active-site charge relay system residues include His153 and Asp206. Disulfide bonds link Cys240-Cys316, Cys273-Cys296, and Cys306-Cys334. An N-linked (GlcNAc...) asparagine glycan is attached at Asn279. Thr310 functions as the Charge relay system in the catalytic mechanism.

The protein belongs to the peptidase S1 family. Testis specific. Differentially expressed in some breast cancer tissues.

The protein localises to the endoplasmic reticulum. Functionally, may be involved in proteolysis through its threonine endopeptidase activity. This Homo sapiens (Human) protein is Probable threonine protease PRSS50 (PRSS50).